The sequence spans 462 residues: Metacaspase-1 (462 aa).

A compositionally biased stretch (pro residues) spans 1–21 (MSYYPPPSGYPGGPPAYPPPQ). The segment at 1-150 (MSYYPPPSGY…PPPPSGSVAF (150 aa)) is disordered. Positions 22–33 (QQQQQQQQYPSY) are enriched in low complexity. 2 stretches are compositionally biased toward pro residues: residues 49–69 (PSYP…PPHS) and 77–102 (SPQP…PPSP). Residues His253 and Cys309 contribute to the active site.

Belongs to the peptidase C14B family.

Functionally, involved in cell death (apoptosis). This Coccidioides immitis (strain RS) (Valley fever fungus) protein is Metacaspase-1 (MCA1).